Reading from the N-terminus, the 337-residue chain is Dihydroorotate dehydrogenase (quinone) (337 aa).

FMN is bound by residues 58–62 (AGLDK) and T82. K62 is a substrate binding site. A substrate-binding site is contributed by 107-111 (NCMGF). Positions 137 and 170 each coordinate FMN. Position 170 (N170) interacts with substrate. The Nucleophile role is filled by S173. N175 contacts substrate. FMN is bound by residues K215 and T243. A substrate-binding site is contributed by 244–245 (NT). FMN contacts are provided by residues G266, G294, and 315-316 (YS).

Belongs to the dihydroorotate dehydrogenase family. Type 2 subfamily. Monomer. Requires FMN as cofactor.

The protein resides in the cell membrane. The enzyme catalyses (S)-dihydroorotate + a quinone = orotate + a quinol. The protein operates within pyrimidine metabolism; UMP biosynthesis via de novo pathway; orotate from (S)-dihydroorotate (quinone route): step 1/1. Its function is as follows. Catalyzes the conversion of dihydroorotate to orotate with quinone as electron acceptor. The chain is Dihydroorotate dehydrogenase (quinone) from Dichelobacter nodosus (strain VCS1703A).